The following is a 775-amino-acid chain: ATP-dependent 6-phosphofructokinase 2 (775 aa).

Residues 1–390 (MTNTILDTYS…YHSAYRHLNT (390 aa)) are N-terminal catalytic PFK domain 1. ATP contacts are provided by residues Gly-25, 88–89 (RC), and 118–121 (GDGS). Asp-119 is a binding site for Mg(2+). Substrate contacts are provided by residues 164 to 166 (SID), Arg-201, 208 to 210 (MGR), Glu-264, Arg-292, and 298 to 301 (HIQR). Catalysis depends on Asp-166, which acts as the Proton acceptor. The interval 391 to 404 (SDHPKMVLPEDKRM) is interdomain linker. Residues 405-775 (RVAIIHVGAP…GRSSLYAIPN (371 aa)) form a C-terminal regulatory PFK domain 2 region. Beta-D-fructose 2,6-bisphosphate is bound by residues 537–541 (SMSNN), 582–584 (QGA), Asp-640, and 672–675 (HFQQ).

This sequence belongs to the phosphofructokinase type A (PFKA) family. ATP-dependent PFK group I subfamily. Eukaryotic two domain clade 'E' sub-subfamily. As to quaternary structure, homotetramer. Requires Mg(2+) as cofactor.

The protein resides in the cytoplasm. It catalyses the reaction beta-D-fructose 6-phosphate + ATP = beta-D-fructose 1,6-bisphosphate + ADP + H(+). It functions in the pathway carbohydrate degradation; glycolysis; D-glyceraldehyde 3-phosphate and glycerone phosphate from D-glucose: step 3/4. With respect to regulation, allosterically activated by ADP, AMP, or fructose 2,6-bisphosphate, and allosterically inhibited by ATP or citrate. In terms of biological role, catalyzes the phosphorylation of D-fructose 6-phosphate to fructose 1,6-bisphosphate by ATP, the first committing step of glycolysis. The protein is ATP-dependent 6-phosphofructokinase 2 (pfkB) of Aspergillus oryzae (strain ATCC 42149 / RIB 40) (Yellow koji mold).